The following is a 472-amino-acid chain: Glutamate--tRNA ligase 2 (472 aa).

The 'HIGH' region signature appears at 10 to 20 (PSPTGYLHIGG). Cys99, Cys101, Cys126, and Asp128 together coordinate Zn(2+). Basic and acidic residues predominate over residues 112–130 (EQQARKEKPRYDGRCRDLD). The interval 112 to 137 (EQQARKEKPRYDGRCRDLDGPPSEEV) is disordered. The 'KMSKS' region signature appears at 240–244 (RLSKR). Residue Lys243 coordinates ATP.

This sequence belongs to the class-I aminoacyl-tRNA synthetase family. Glutamate--tRNA ligase type 1 subfamily. In terms of assembly, monomer. The cofactor is Zn(2+).

The protein localises to the cytoplasm. The enzyme catalyses tRNA(Glu) + L-glutamate + ATP = L-glutamyl-tRNA(Glu) + AMP + diphosphate. In terms of biological role, catalyzes the attachment of glutamate to tRNA(Glu) in a two-step reaction: glutamate is first activated by ATP to form Glu-AMP and then transferred to the acceptor end of tRNA(Glu). In Halorhodospira halophila (strain DSM 244 / SL1) (Ectothiorhodospira halophila (strain DSM 244 / SL1)), this protein is Glutamate--tRNA ligase 2.